The chain runs to 367 residues: Cyclin-dependent kinase 5 activator 2 (367 aa).

Polar residues predominate over residues 1 to 11 (MGTVLSLSPAS). Disordered stretches follow at residues 1–56 (MGTV…RLKR), 72–98 (ASAK…LVQQ), 131–175 (AAAT…GSPR), and 329–367 (GEAA…NLDR). Gly-2 carries the N-myristoyl glycine lipid modification. Basic residues predominate over residues 74-84 (AKKKKGSKKVT). Thr-84 is subject to Phosphothreonine. The segment covering 131–148 (AAATCEPPSGGSAAAQPP) has biased composition (low complexity). Over residues 154 to 171 (KPPPPPPPAPQVAPPVPG) the composition is skewed to pro residues. Residues 342-357 (GAPAASSAARDSCAAG) are compositionally biased toward low complexity.

The protein belongs to the cyclin-dependent kinase 5 activator family. In terms of assembly, heterodimer of a catalytic subunit and a regulatory subunit. Post-translationally, myristoylated. The Gly-2-Ala mutant is absent of the cell periphery, suggesting that a proper myristoylation signal is essential for the proper distribution of CDK5R2 (p39). In terms of tissue distribution, brain and neuron specific.

Its subcellular location is the cell membrane. Its function is as follows. Activator of CDK5/TPKII. The chain is Cyclin-dependent kinase 5 activator 2 (CDK5R2) from Homo sapiens (Human).